Consider the following 108-residue polypeptide: Ribulose bisphosphate carboxylase small subunit (108 aa).

Belongs to the RuBisCO small chain family. In terms of assembly, heterohexadecamer of 8 large and 8 small subunits.

Its function is as follows. RuBisCO catalyzes two reactions: the carboxylation of D-ribulose 1,5-bisphosphate, the primary event in carbon dioxide fixation, as well as the oxidative fragmentation of the pentose substrate. Both reactions occur simultaneously and in competition at the same active site. Although the small subunit is not catalytic it is essential for maximal activity. This Nitrobacter vulgaris protein is Ribulose bisphosphate carboxylase small subunit.